A 400-amino-acid polypeptide reads, in one-letter code: Dual specificity mitogen-activated protein kinase kinase 2 (400 aa).

Residue Met1 is modified to N-acetylmethionine. Position 23 is a phosphoserine (Ser23). Positions 72–369 (FERISELGAG…LKMLMSHTFI (298 aa)) constitute a Protein kinase domain. ATP-binding positions include 78-86 (LGAGNGGVV) and Lys101. Asp194 (proton acceptor) is an active-site residue. Phosphoserine; by RAF is present on Ser222. Ser226, Ser293, Ser295, and Ser306 each carry phosphoserine. The interval 288-309 (EGEPHSISPRPRPPGRPISGHG) is disordered. A phosphothreonine mark is found at Thr394 and Thr396.

It belongs to the protein kinase superfamily. STE Ser/Thr protein kinase family. MAP kinase kinase subfamily. In terms of assembly, interacts with MORG1. Interacts with SGK1. Interacts with KSR1. Interacts with KSR1 and BRAF; the interaction with KSR1 mediates KSR1-BRAF dimerization. Interacts with GLS. It depends on Mg(2+) as a cofactor. MAPKK is itself dependent on Ser/Thr phosphorylation for activity catalyzed by MAP kinase kinase kinases (RAF or MEKK1).

The protein localises to the cytoplasm. It is found in the membrane. The enzyme catalyses L-seryl-[protein] + ATP = O-phospho-L-seryl-[protein] + ADP + H(+). The catalysed reaction is L-threonyl-[protein] + ATP = O-phospho-L-threonyl-[protein] + ADP + H(+). It catalyses the reaction L-tyrosyl-[protein] + ATP = O-phospho-L-tyrosyl-[protein] + ADP + H(+). Its function is as follows. Catalyzes the concomitant phosphorylation of a threonine and a tyrosine residue in a Thr-Glu-Tyr sequence located in MAP kinases. Activates the ERK1 and ERK2 MAP kinases. Activates BRAF in a KSR1 or KSR2-dependent manner; by binding to KSR1 or KSR2 releases the inhibitory intramolecular interaction between KSR1 or KSR2 protein kinase and N-terminal domains which promotes KSR1 or KSR2-BRAF dimerization and BRAF activation. The sequence is that of Dual specificity mitogen-activated protein kinase kinase 2 (MAP2K2) from Canis lupus familiaris (Dog).